Consider the following 419-residue polypeptide: RNA polymerase sigma factor sigD, chloroplastic (419 aa).

A chloroplast-targeting transit peptide spans 1–52 (MATTIPTTATATMCPSPPVPTISPLLRTTHQCQPSPSLSSPFSIKLSTALVC). Positions 207–220 (DLIQEGSIGLLRGA) match the Polymerase core binding motif. The H-T-H motif DNA-binding region spans 377–396 (FEEIGKSLKLSRERVRQING).

The protein belongs to the sigma-70 factor family. As to expression, mostly expressed in leaves, and to a lesser extent in roots. Present in seedlings.

It is found in the plastid. Its subcellular location is the chloroplast. In terms of biological role, sigma factors are initiation factors that promote the attachment of plastid-encoded RNA polymerase (PEP) to specific initiation sites and are then released. Regulates transcription of the ndhF gene which codes for a subunit of the plastid NDH [NAD(P)H dehydrogenase] complex. This chain is RNA polymerase sigma factor sigD, chloroplastic (SIGD), found in Arabidopsis thaliana (Mouse-ear cress).